Consider the following 432-residue polypeptide: Adenylosuccinate synthetase (432 aa).

Residues 12–18 and 40–42 contribute to the GTP site; these read GDEGKGK and GHT. The active-site Proton acceptor is the Asp-13. Residues Asp-13 and Gly-40 each contribute to the Mg(2+) site. Residues 13–16, 38–41, Thr-132, Arg-146, Gln-226, Thr-241, and Arg-305 each bind IMP; these read DEGK and NAGH. The active-site Proton donor is the His-41. Residue 301–307 participates in substrate binding; that stretch reads VVTGRKR. GTP contacts are provided by residues Arg-307, 333–335, and 415–417; these read KLD and STS.

This sequence belongs to the adenylosuccinate synthetase family. In terms of assembly, homodimer. It depends on Mg(2+) as a cofactor.

The protein localises to the cytoplasm. It catalyses the reaction IMP + L-aspartate + GTP = N(6)-(1,2-dicarboxyethyl)-AMP + GDP + phosphate + 2 H(+). The protein operates within purine metabolism; AMP biosynthesis via de novo pathway; AMP from IMP: step 1/2. Its function is as follows. Plays an important role in the de novo pathway of purine nucleotide biosynthesis. Catalyzes the first committed step in the biosynthesis of AMP from IMP. This chain is Adenylosuccinate synthetase, found in Rhizobium leguminosarum bv. trifolii (strain WSM2304).